Here is a 317-residue protein sequence, read N- to C-terminus: Thymidylate synthase (317 aa).

DUMP-binding positions include Arg-40 and 167 to 168 (RR). Cys-187 functions as the Nucleophile in the catalytic mechanism. DUMP is bound by residues 216-219 (RSCD), Asn-227, and 257-259 (HVY). Asp-219 is a (6R)-5,10-methylene-5,6,7,8-tetrahydrofolate binding site.

This sequence belongs to the thymidylate synthase family. In terms of assembly, homodimer.

It carries out the reaction dUMP + (6R)-5,10-methylene-5,6,7,8-tetrahydrofolate = 7,8-dihydrofolate + dTMP. The protein operates within pyrimidine metabolism; dTTP biosynthesis. The polypeptide is Thymidylate synthase (TMP1) (Cryptococcus neoformans var. neoformans serotype D (strain B-3501A) (Filobasidiella neoformans)).